A 218-amino-acid chain; its full sequence is Glutathione S-transferase class-mu 26 kDa isozyme (218 aa).

Positions 1-83 (MAPKFGYWKV…YIADKHNMLG (83 aa)) constitute a GST N-terminal domain. Glutathione is bound by residues 7–8 (YW), 41–45 (WSNDK), 54–55 (NL), and 67–68 (QS). The GST C-terminal domain maps to 85–203 (CPKERAEISM…NSSRYIKWPL (119 aa)). Substrate is bound at residue Y111.

It belongs to the GST superfamily. Mu family. Homodimer. Tegument and in subtegumentary parenchymal cells. GST 26 may be actively excreted by adult worms.

The enzyme catalyses RX + glutathione = an S-substituted glutathione + a halide anion + H(+). Functionally, conjugation of reduced glutathione to a wide number of exogenous and endogenous hydrophobic electrophiles. In terms of biological role, GST isoenzymes appear to play a central role in the parasite detoxification system. Other functions are also suspected including a role in increasing the solubility of haematin in the parasite gut. The sequence is that of Glutathione S-transferase class-mu 26 kDa isozyme from Schistosoma mansoni (Blood fluke).